The primary structure comprises 366 residues: Spermine synthase (366 aa).

Ala-2 is modified (N-acetylalanine). Phosphoserine is present on Ser-57. A PABS domain is found at 122-362 (RYWPTADGRL…ELWVFYTVWK (241 aa)). Residue Gln-148 participates in S-adenosyl 3-(methylsulfanyl)propylamine binding. Spermidine is bound by residues Tyr-177 and Asp-201. S-adenosyl 3-(methylsulfanyl)propylamine is bound by residues Glu-220 and 255 to 256 (DC). Asp-276 (proton acceptor) is an active-site residue. Positions 351 and 353 each coordinate spermidine.

Belongs to the spermidine/spermine synthase family. In terms of assembly, homodimer. Dimerization is mediated through the N-terminal domain and seems to be required for activity as deletion of the N-terminal domain causes complete loss of activity.

The enzyme catalyses S-adenosyl 3-(methylsulfanyl)propylamine + spermidine = spermine + S-methyl-5'-thioadenosine + H(+). Its pathway is amine and polyamine biosynthesis; spermine biosynthesis; spermine from spermidine: step 1/1. In terms of biological role, catalyzes the production of spermine from spermidine and decarboxylated S-adenosylmethionine (dcSAM). The sequence is that of Spermine synthase from Homo sapiens (Human).